A 293-amino-acid chain; its full sequence is 4-diphosphocytidyl-2-C-methyl-D-erythritol kinase (293 aa).

The active site involves Lys-16. 99–109 (PMGAGLGGGSS) contributes to the ATP binding site. The active site involves Asp-141.

The protein belongs to the GHMP kinase family. IspE subfamily.

The enzyme catalyses 4-CDP-2-C-methyl-D-erythritol + ATP = 4-CDP-2-C-methyl-D-erythritol 2-phosphate + ADP + H(+). The protein operates within isoprenoid biosynthesis; isopentenyl diphosphate biosynthesis via DXP pathway; isopentenyl diphosphate from 1-deoxy-D-xylulose 5-phosphate: step 3/6. In terms of biological role, catalyzes the phosphorylation of the position 2 hydroxy group of 4-diphosphocytidyl-2C-methyl-D-erythritol. This Paraburkholderia phymatum (strain DSM 17167 / CIP 108236 / LMG 21445 / STM815) (Burkholderia phymatum) protein is 4-diphosphocytidyl-2-C-methyl-D-erythritol kinase.